The primary structure comprises 751 residues: SKI family transcriptional corepressor 1 homolog-B (751 aa).

Disordered stretches follow at residues 1-30 (MESIPNQLPAGRDSSCSPNSKDLQSYSGPP), 234-267 (SRKRTLPIGRSESSPSQPPRGQTQGEPSDVPHKT), 386-434 (LDVS…GIPP), 459-569 (YGNR…HGNK), and 600-635 (QRETSVKDVHEEEPSSTVEEMEPKNHQDENNISEER). 2 stretches are compositionally biased toward polar residues: residues 14–27 (SSCSPNSKDLQSYS) and 244–259 (SESSPSQPPRGQTQGE). Residues 416–428 (RNEEDKSGDESRS) are compositionally biased toward basic and acidic residues. Residues 479-491 (SESSSYRSVSPDV) are compositionally biased toward low complexity. Positions 539–558 (QENTQMHTLNDLHSTNSSET) are enriched in polar residues. 3 stretches are compositionally biased toward basic and acidic residues: residues 559-569 (RPSDMESHGNK), 603-612 (TSVKDVHEEE), and 620-635 (MEPKNHQDENNISEER). The stretch at 666–704 (SMAKEELQKQLVEQVELRKKLEREFQNLKDSFQDQMKRE) forms a coiled coil.

This sequence belongs to the SKI family.

It is found in the nucleus. Its function is as follows. May inhibit BMP signaling. This Danio rerio (Zebrafish) protein is SKI family transcriptional corepressor 1 homolog-B (skor1b).